The primary structure comprises 239 residues: L-cystine transport system permease protein TcyL (239 aa).

The ABC transmembrane type-1 domain occupies 21-216 (LPVTLYILTL…AVAVLFEWFF (196 aa)). 4 helical membrane-spanning segments follow: residues 25 to 45 (LYIL…LALP), 69 to 89 (IMVQ…LIGI), 96 to 116 (PFYA…AEII), and 196 to 216 (EVYI…EWFF).

The protein belongs to the binding-protein-dependent transport system permease family. The complex is composed of two ATP-binding proteins (TcyN), two transmembrane proteins (TcyL and TcyM) and two solute-binding proteins (TcyJ and TcyK).

Its subcellular location is the cell membrane. Its function is as follows. Part of the ABC transporter complex TcyJKLMN involved in L-cystine import. Probably responsible for the translocation of the substrate across the membrane. Is also involved in cystathionine, djenkolate, and S-methylcysteine transport. The chain is L-cystine transport system permease protein TcyL (tcyL) from Bacillus subtilis (strain 168).